The chain runs to 253 residues: 5'-nucleotidase SurE (253 aa).

Aspartate 8, aspartate 9, serine 39, and asparagine 95 together coordinate a divalent metal cation.

This sequence belongs to the SurE nucleotidase family. A divalent metal cation is required as a cofactor.

The protein resides in the cytoplasm. It catalyses the reaction a ribonucleoside 5'-phosphate + H2O = a ribonucleoside + phosphate. In terms of biological role, nucleotidase that shows phosphatase activity on nucleoside 5'-monophosphates. The sequence is that of 5'-nucleotidase SurE from Chloroflexus aggregans (strain MD-66 / DSM 9485).